Reading from the N-terminus, the 1010-residue chain is MDLNRIIQALKGTIDPKLRIAAETELNQSYKIINFAPSLLRIIVSDHVEFPVRQAAAIYLKNMVTQYWPDREPPPGEVIFPFNIHENDRQQIRDNIVEGIIRSPDLVRVQLTMCLRVIIRHDFPGHWPAVVDKIDYYLQSPNSGSWLGSLLCLYQLVKTYEYKKAEEREPLLAAMQIFLPRIQQQILQLLPDASHYSVLLQKQILKIFYALVQYALPLQLVNHQTMTTWMEIFRTIIDRTVPPETLQIDEDDRPELVWWKCKKWALHIVARLFERYGSPGNVTKEYFEFSEFFLKTYAVGIQQVLLKILDQYRQKEYIAPRVLQQAFNYLNQGVVHAVTWKQMKPHIQNISEDVIFSVMCYKDEDEELWQEDPYEYIRMKFDIFEDYASPTTAAQTLLYTAAKKRKEVLPKMMAFCYQILTDPNFDPRKKDGALHVIGSLAEILLKKSLFKDQIELFLQNHVFPLLMSNLGYLRARSCWVLHAFSSLKFHNELNLRNAVELAKKSLIEDEEMPVKVEAALALQSLISNQAQAKEHMKPYVRFIMQELLHIVRETENDDVTNVIQKLICEYSQDVASIAVDTTQHLAEIFGKVLQSDEYEEIEDKTVMAMGILHTIDTILTVVEDHPEIIQQLENICLRIIDLVLQKHVIEFYEEILSLAYNLTCHTISPQMWQLLGILYEVFQQDCFEYFTDMMPLLHNYVTVDTNALLSNPKHLEVLFTMCRKVLCGEAGEDAECYAAKLLEVIILQCKGRGIDQCIPLFIQLVLERLTRGVKTSELRTMCLQVAIAALYYSPELLFHTLEQVQLPHNPGPVTSQFINQWMNDTDYFLGHHDRKMCIIGLSVLLELQNRPPAVDAVAAQILPSILFLFLGLKQVCATRQTVNRENHSKAEKVDIEENEEISSEEEEETSVSAQAMQSQIGRSEEEDDDDWDEEVLEETALEGFSTPLDLDNSVDEYQFFTQALLTVQNRDAAWYQLLVAPLSEDQKRKLQEVYTLAEHRRTLAAGQFHI.

In terms of domain architecture, Importin N-terminal spans 22–102; sequence AETELNQSYK…RDNIVEGIIR (81 aa). Residues 886–895 are compositionally biased toward basic and acidic residues; it reads NHSKAEKVDI. A disordered region spans residues 886 to 932; it reads NHSKAEKVDIEENEEISSEEEEETSVSAQAMQSQIGRSEEEDDDDWD. Over residues 896-909 the composition is skewed to acidic residues; the sequence is EENEEISSEEEEET. A phosphoserine mark is found at Ser902 and Ser903. Polar residues predominate over residues 910–921; the sequence is SVSAQAMQSQIG.

It belongs to the importin beta family. As to quaternary structure, forms a heterodimer with KPNB1. Interacts with SRP19. Interacts with RPL23A. Binds directly to nuclear pore complexes. Interacts with LRPPRC; the interaction occurs when LRPPRC is in its RNA-free form and promotes import of LRPPRC to the nucleus to allow for EIF4E-mediated export of mRNAS from the nucleus to the cytoplasm.

It localises to the cytoplasm. The protein localises to the nucleus. Its function is as follows. Involved in nuclear protein import, either by acting as autonomous nuclear transport receptor or as an adapter-like protein in association with the importin-beta subunit KPNB1. Acting autonomously, may serve as receptor for nuclear localization signals (NLS) and promote translocation of import substrates through the nuclear pore complex (NPC) by an energy requiring, Ran-dependent mechanism. At the nucleoplasmic side of the NPC, Ran binds to importin, the importin/substrate complex dissociates and importin is re-exported from the nucleus to the cytoplasm where GTP hydrolysis releases Ran. The directionality of nuclear import is thought to be conferred by an asymmetric distribution of the GTP- and GDP-bound forms of Ran between the cytoplasm and nucleus. In vitro mediates the nuclear import of the signal recognition particle protein SRP19. May also be involved in cytoplasm-to-nucleus shuttling of a broad spectrum of other cargos, including Argonaute-microRNAs complexes, the JUN protein, RELA/NF-kappa-B p65 subunit, the translation initiation factor EIF4E and a set of receptor-activated mothers against decapentaplegic homolog (SMAD) transcription factors that play a critical role downstream of the large family of transforming growth factor beta and bone morphogenetic protein (BMP) cytokines. The sequence is that of Importin-8 from Mus musculus (Mouse).